Consider the following 745-residue polypeptide: Poly(A) polymerase alpha (745 aa).

Low complexity predominate over residues 1–17 (MPFPVTTQGSQQTQPPQ). The disordered stretch occupies residues 1 to 22 (MPFPVTTQGSQQTQPPQKHYGI). Phosphoserine is present on residues serine 10 and serine 24. ATP-binding positions include 100-102 (FGS), threonine 109, 113-115 (DID), aspartate 167, lysine 228, tyrosine 237, and 246-247 (GV). Residues aspartate 113, aspartate 115, and aspartate 167 each contribute to the Mg(2+) site. Glycyl lysine isopeptide (Lys-Gly) (interchain with G-Cter in SUMO) cross-links involve residues lysine 444, lysine 445, lysine 506, and lysine 507. The Nuclear localization signal 1 motif lies at 490 to 507 (RKQLHQLLPNHVLQKKKK). The tract at residues 508–643 (HSTEGVKLTA…TSGNAATKIP (136 aa)) is ser/Thr-rich. The span at 523–534 (LDLSMDSDNSMS) shows a compositional bias: low complexity. 2 disordered regions span residues 523-565 (LDLS…AVTA) and 577-704 (SVPQ…SETI). The segment covering 535-557 (VPSPTSATKTSPLNSSGSSQGRN) has biased composition (polar residues). A phosphoserine mark is found at serine 537 and serine 558. Composition is skewed to low complexity over residues 583 to 594 (SSESSGGTSSES) and 611 to 640 (TVSR…NAAT). N6-acetyllysine occurs at positions 641 and 650. The Nuclear localization signal 2 motif lies at 650 to 665 (KRTSSPHKEESPKKTK). 2 stretches are compositionally biased toward basic and acidic residues: residues 655 to 666 (PHKEESPKKTKT) and 682 to 692 (GHDKTEAKEQL). The interval 677–745 (CLALSGHDKT…KNSIKLRLNR (69 aa)) is required for interaction with NUDT21. Low complexity predominate over residues 694–704 (TETSTTQSETI). An N6-acetyllysine; alternate modification is found at lysine 736. Residue lysine 736 forms a Glycyl lysine isopeptide (Lys-Gly) (interchain with G-Cter in SUMO); alternate linkage. Serine 738 bears the Phosphoserine mark. An N6-acetyllysine; alternate modification is found at lysine 740. Residue lysine 740 forms a Glycyl lysine isopeptide (Lys-Gly) (interchain with G-Cter in SUMO); alternate linkage.

It belongs to the poly(A) polymerase family. Monomer. Found in a complex with CPSF1, FIP1L1 and PAPOLA. Interacts with AHCYL1 and FIP1L1; the interaction with AHCYL1 seems to increase interaction with FIP1L1. Interacts with NUDT21; the interaction is diminished by acetylation. Interacts with KPNB1; the interaction promotes PAP nuclear import and is inhibited by acetylation of PAP. Requires Mg(2+) as cofactor. Mn(2+) serves as cofactor. Post-translationally, polysumoylated. Varying sumoylation depending on tissue- and cell-type. Highly sumoylated in bladder and NIH 3T3 cells. Sumoylation is required for nuclear localization and enhances PAP stability. Desumoylated by SENP1. Inhibits polymerase activity. In terms of processing, hyperphosphorylation on multiple CDK2 consensus and non-consensus sites in the C-terminal Ser/Thr-rich region represses PAP activity in late M-phase. Phosphorylation/dephosphorylation may regulate the interaction between PAP and CPSF. Acetylated in the C-terminus. Acetylation decreases interaction with NUDT21 and KPNB1, and inhibits nuclear localization through inhibiting binding to the importin alpha/beta complex.

It localises to the cytoplasm. It is found in the nucleus. It carries out the reaction RNA(n) + ATP = RNA(n)-3'-adenine ribonucleotide + diphosphate. Its function is as follows. Polymerase that creates the 3'-poly(A) tail of mRNA's. Also required for the endoribonucleolytic cleavage reaction at some polyadenylation sites. May acquire specificity through interaction with a cleavage and polyadenylation specificity factor (CPSF) at its C-terminus. This is Poly(A) polymerase alpha (PAPOLA) from Homo sapiens (Human).